Here is a 432-residue protein sequence, read N- to C-terminus: Adenosylhomocysteinase (432 aa).

Positions 56, 131, and 156 each coordinate substrate. 157–159 (TTT) is a binding site for NAD(+). Substrate-binding residues include Lys-186 and Asp-190. NAD(+) contacts are provided by residues Asn-191, 222-227 (GDVGKG), Glu-243, 299-301 (IGH), and Asn-346.

Belongs to the adenosylhomocysteinase family. The cofactor is NAD(+).

It catalyses the reaction S-adenosyl-L-homocysteine + H2O = L-homocysteine + adenosine. It functions in the pathway amino-acid biosynthesis; L-homocysteine biosynthesis; L-homocysteine from S-adenosyl-L-homocysteine: step 1/1. Functionally, adenosylhomocysteine is a competitive inhibitor of S-adenosyl-L-methionine-dependent methyl transferase reactions; therefore adenosylhomocysteinase may play a key role in the control of methylations via regulation of the intracellular concentration of adenosylhomocysteine. The protein is Adenosylhomocysteinase (Ahcy13) of Anopheles gambiae (African malaria mosquito).